The sequence spans 622 residues: Probable methionine--tRNA ligase, mitochondrial (622 aa).

The 'HIGH' region signature appears at 67–79; the sequence is PIFYVNASPHVGH. The short motif at 366–370 is the 'KMSKS' region element; the sequence is KMSKS. An ATP-binding site is contributed by lysine 369. Residues 592–622 are disordered; the sequence is LDDIKGMGPDAGSKKHSSGNKPSSGNKKPTA. The segment covering 610 to 622 has biased composition (low complexity); sequence GNKPSSGNKKPTA.

It belongs to the class-I aminoacyl-tRNA synthetase family.

The protein resides in the mitochondrion matrix. The enzyme catalyses tRNA(Met) + L-methionine + ATP = L-methionyl-tRNA(Met) + AMP + diphosphate. The chain is Probable methionine--tRNA ligase, mitochondrial from Neurospora crassa (strain ATCC 24698 / 74-OR23-1A / CBS 708.71 / DSM 1257 / FGSC 987).